The primary structure comprises 291 residues: Glycine--tRNA ligase alpha subunit (291 aa).

Belongs to the class-II aminoacyl-tRNA synthetase family. As to quaternary structure, tetramer of two alpha and two beta subunits.

The protein resides in the cytoplasm. The catalysed reaction is tRNA(Gly) + glycine + ATP = glycyl-tRNA(Gly) + AMP + diphosphate. This chain is Glycine--tRNA ligase alpha subunit, found in Geotalea uraniireducens (strain Rf4) (Geobacter uraniireducens).